An 87-amino-acid polypeptide reads, in one-letter code: Sec-independent protein translocase protein TatA (87 aa).

A helical membrane pass occupies residues 1–21; it reads MGSFSITHWLILLVVVVVVFG. Residues 56–87 are disordered; the sequence is VLDHDAGTNPPNITGTQSDTTSANKVDDTHNV. Residues 64–79 are compositionally biased toward polar residues; that stretch reads NPPNITGTQSDTTSAN.

This sequence belongs to the TatA/E family. As to quaternary structure, the Tat system comprises two distinct complexes: a TatABC complex, containing multiple copies of TatA, TatB and TatC subunits, and a separate TatA complex, containing only TatA subunits. Substrates initially bind to the TatABC complex, which probably triggers association of the separate TatA complex to form the active translocon.

The protein localises to the cell inner membrane. Its function is as follows. Part of the twin-arginine translocation (Tat) system that transports large folded proteins containing a characteristic twin-arginine motif in their signal peptide across membranes. TatA could form the protein-conducting channel of the Tat system. The sequence is that of Sec-independent protein translocase protein TatA from Psychrobacter arcticus (strain DSM 17307 / VKM B-2377 / 273-4).